Reading from the N-terminus, the 120-residue chain is Ribonuclease P protein component (120 aa).

The protein belongs to the RnpA family. As to quaternary structure, consists of a catalytic RNA component (M1 or rnpB) and a protein subunit.

The catalysed reaction is Endonucleolytic cleavage of RNA, removing 5'-extranucleotides from tRNA precursor.. In terms of biological role, RNaseP catalyzes the removal of the 5'-leader sequence from pre-tRNA to produce the mature 5'-terminus. It can also cleave other RNA substrates such as 4.5S RNA. The protein component plays an auxiliary but essential role in vivo by binding to the 5'-leader sequence and broadening the substrate specificity of the ribozyme. This is Ribonuclease P protein component from Pseudoalteromonas atlantica (strain T6c / ATCC BAA-1087).